A 478-amino-acid polypeptide reads, in one-letter code: Melanopsin (478 aa).

Residues 1-14 (MNPPSGPRVPPSPT) show a composition bias toward pro residues. A disordered region spans residues 1–32 (MNPPSGPRVPPSPTQEPSCMATPAPPSWWDSS). Topologically, residues 1–72 (MNPPSGPRVP…VDVPDHAHYT (72 aa)) are extracellular. The chain crosses the membrane as a helical span at residues 73 to 93 (LGTVILLVGLTGMLGNLTVIY). Over 94-107 (TFCRSRSLRTPANM) the chain is Cytoplasmic. A helical transmembrane segment spans residues 108–128 (FIINLAVSDFLMSFTQAPVFF). The Extracellular portion of the chain corresponds to 129 to 144 (TSSLYKQWLFGETGCE). The cysteines at positions 143 and 221 are disulfide-linked. The helical transmembrane segment at 145–165 (FYAFCGALFGISSMITLTAIA) threads the bilayer. At 166 to 188 (LDRYLVITRPLATFGVASKRRAA) the chain is on the cytoplasmic side. The helical transmembrane segment at 189–209 (FVLLGVWLYALAWSLPPFFGW) threads the bilayer. Topologically, residues 210–238 (SAYVPEGLLTSCSWDYMSFTPAVRAYTML) are extracellular. The chain crosses the membrane as a helical span at residues 239–259 (LCCFVFFLPLLIIIYCYIFIF). The Cytoplasmic portion of the chain corresponds to 260–296 (RAIRETGRALQTFGACKGNGESLWQRQRLQSECKMAK). A helical transmembrane segment spans residues 297-317 (IMLLVILLFVLSWAPYSAVAL). Residues 318-332 (VAFAGYAHVLTPYMS) are Extracellular-facing. A helical membrane pass occupies residues 333-353 (SVPAVIAKASAIHNPIIYAIT). Lys340 is modified (N6-(retinylidene)lysine). Residues 354–478 (HPKYRVAIAQ…GLIPSQDPRM (125 aa)) lie on the Cytoplasmic side of the membrane. A disordered region spans residues 440-478 (LYGQGLEDLEAKAPPRPQGHEAETPGKTKGLIPSQDPRM). A compositionally biased stretch (basic and acidic residues) spans 448–465 (LEAKAPPRPQGHEAETPG).

The protein belongs to the G-protein coupled receptor 1 family. Opsin subfamily. As to expression, expressed in the retina.

The protein localises to the cell membrane. It localises to the cell projection. It is found in the axon. Its subcellular location is the dendrite. The protein resides in the perikaryon. Photoreceptor that binds cis-retinaldehydes. Contributes to pupillar reflex, photoentrainment and other non-image forming responses to light. May be involved in the optokinetic visual tracking response. May be involved in the regulation of retinal hyaloid vessel growth and regression. The sequence is that of Melanopsin (OPN4) from Homo sapiens (Human).